A 218-amino-acid chain; its full sequence is GTP cyclohydrolase 1 (218 aa).

Positions 109, 112, and 180 each coordinate Zn(2+).

Belongs to the GTP cyclohydrolase I family. As to quaternary structure, toroid-shaped homodecamer, composed of two pentamers of five dimers.

It catalyses the reaction GTP + H2O = 7,8-dihydroneopterin 3'-triphosphate + formate + H(+). It participates in cofactor biosynthesis; 7,8-dihydroneopterin triphosphate biosynthesis; 7,8-dihydroneopterin triphosphate from GTP: step 1/1. The polypeptide is GTP cyclohydrolase 1 (Histophilus somni (strain 129Pt) (Haemophilus somnus)).